A 920-amino-acid polypeptide reads, in one-letter code: Neurofibromin-A (920 aa).

Residues 63 to 291 enclose the Ras-GAP domain; the sequence is NKTLPLIKDL…EKMSAYFNLI (229 aa). Disordered regions lie at residues 344-405 and 477-508; these read KWLA…TTTA and LGPS…GASM. Positions 346–369 are enriched in polar residues; it reads LATTPSGNTPSPAISNASSAHNGK. Over residues 370 to 405 the composition is skewed to low complexity; the sequence is SNNTTNNNNNNNNNNNNNNNNNNNNNNNSNKTTTTA. Positions 498 to 507 are enriched in polar residues; sequence PTTSLQNGAS. A CRAL-TRIO domain is found at 512 to 673; sequence FDECTHMLER…TSKDFITKSY (162 aa).

Its function is as follows. Regulator of the GTPase activity of Ras, mainly RasG and RasB. This chain is Neurofibromin-A (nfaA), found in Dictyostelium discoideum (Social amoeba).